An 80-amino-acid polypeptide reads, in one-letter code: Exodeoxyribonuclease 7 small subunit (80 aa).

This sequence belongs to the XseB family. Heterooligomer composed of large and small subunits.

It is found in the cytoplasm. It carries out the reaction Exonucleolytic cleavage in either 5'- to 3'- or 3'- to 5'-direction to yield nucleoside 5'-phosphates.. Bidirectionally degrades single-stranded DNA into large acid-insoluble oligonucleotides, which are then degraded further into small acid-soluble oligonucleotides. The polypeptide is Exodeoxyribonuclease 7 small subunit (Rickettsia massiliae (strain Mtu5)).